The sequence spans 315 residues: L-lactate dehydrogenase (315 aa).

Residues Val-17, Asp-38, Lys-43, Tyr-69, and 83–84 each bind NAD(+); that span reads GA. Substrate is bound by residues Gln-86, Arg-92, and 124–127; that span reads NPVD. NAD(+)-binding positions include 122-124 and Ser-147; that span reads ATN. 152 to 155 contributes to the substrate binding site; it reads DTAR. Beta-D-fructose 1,6-bisphosphate contacts are provided by Arg-157 and His-172. His-179 functions as the Proton acceptor in the catalytic mechanism. Tyr-224 is subject to Phosphotyrosine. Thr-233 lines the substrate pocket.

This sequence belongs to the LDH/MDH superfamily. LDH family. Homotetramer.

The protein resides in the cytoplasm. It carries out the reaction (S)-lactate + NAD(+) = pyruvate + NADH + H(+). It participates in fermentation; pyruvate fermentation to lactate; (S)-lactate from pyruvate: step 1/1. Allosterically activated by fructose 1,6-bisphosphate (FBP). Its function is as follows. Catalyzes the conversion of lactate to pyruvate. This Bacillus pumilus (strain SAFR-032) protein is L-lactate dehydrogenase.